A 352-amino-acid chain; its full sequence is Protein-glutamate methylesterase/protein-glutamine glutaminase 2 (352 aa).

Residues 1 to 116 (MVVDDSAVVR…KQFLTDSADE (116 aa)) form the Response regulatory domain. Aspartate 50 bears the 4-aspartylphosphate mark. Residues 162 to 352 (AQTTERIVAI…MAREIVTQLQ (191 aa)) form the CheB-type methylesterase domain. Active-site residues include serine 174, histidine 200, and aspartate 296.

Belongs to the CheB family. In terms of processing, phosphorylated by CheA. Phosphorylation of the N-terminal regulatory domain activates the methylesterase activity.

Its subcellular location is the cytoplasm. It catalyses the reaction [protein]-L-glutamate 5-O-methyl ester + H2O = L-glutamyl-[protein] + methanol + H(+). The catalysed reaction is L-glutaminyl-[protein] + H2O = L-glutamyl-[protein] + NH4(+). Its function is as follows. Involved in chemotaxis. Part of a chemotaxis signal transduction system that modulates chemotaxis in response to various stimuli. Catalyzes the demethylation of specific methylglutamate residues introduced into the chemoreceptors (methyl-accepting chemotaxis proteins or MCP) by CheR. Also mediates the irreversible deamidation of specific glutamine residues to glutamic acid. In Xanthomonas euvesicatoria pv. vesicatoria (strain 85-10) (Xanthomonas campestris pv. vesicatoria), this protein is Protein-glutamate methylesterase/protein-glutamine glutaminase 2.